The primary structure comprises 325 residues: MSYRTWLAVCILLILSMVSIGGFTRLTESGLSITEWKPVTGVIPPLSKNAWQKEFDKYKNTPEYKVRHFSISYAEFQFIYLVEYFHRLVGRILGLVFFIGLVYFFVVGNLARESRLRLCFALVLGVIQGFVGWYMVKSGLLDVPAVSHYRLALHLFCASLLFMVLVYEFLSPTVIKGSVFKWHLVGCSLMFLLSMQIILGGLVAGLKAGLICSTFPLMNGEFFPAEIFHELSLNCFNDPVAVQFLHRMSAFLLTFICLVCLVISFFYDRAFRARVFLVASMMLLQMFFGVLTLLFHIPIDIALLHQIMAFILLGICVSFLRVRSG.

5 helical membrane-spanning segments follow: residues W6–L26, L88–G108, L116–V136, L155–I175, and L184–A204. H246 provides a ligand contact to heme. 3 helical membrane passes run M248–D268, V275–F295, and I297–V317. Heme is bound at residue H305.

The protein belongs to the COX15/CtaA family. Type 2 subfamily. Interacts with CtaB. The cofactor is heme b.

The protein localises to the cell membrane. The catalysed reaction is Fe(II)-heme o + 2 A + H2O = Fe(II)-heme a + 2 AH2. Its pathway is porphyrin-containing compound metabolism; heme A biosynthesis; heme A from heme O: step 1/1. Catalyzes the conversion of heme O to heme A by two successive hydroxylations of the methyl group at C8. The first hydroxylation forms heme I, the second hydroxylation results in an unstable dihydroxymethyl group, which spontaneously dehydrates, resulting in the formyl group of heme A. The chain is Heme A synthase from Neorickettsia sennetsu (strain ATCC VR-367 / Miyayama) (Ehrlichia sennetsu).